Here is a 101-residue protein sequence, read N- to C-terminus: Large ribosomal subunit protein eL21 (101 aa).

Residues 1-18 (MVKHSKGYRTRSRSLLRK) are compositionally biased toward basic residues. Residues 1–24 (MVKHSKGYRTRSRSLLRKSPRERG) form a disordered region.

Belongs to the eukaryotic ribosomal protein eL21 family.

This is Large ribosomal subunit protein eL21 (rpl21e) from Saccharolobus solfataricus (strain ATCC 35092 / DSM 1617 / JCM 11322 / P2) (Sulfolobus solfataricus).